The following is a 111-amino-acid chain: Small ribosomal subunit protein bS16 (111 aa).

Belongs to the bacterial ribosomal protein bS16 family.

In Rickettsia prowazekii (strain Madrid E), this protein is Small ribosomal subunit protein bS16.